The primary structure comprises 361 residues: Queuine tRNA-ribosyltransferase (361 aa).

Asp92 functions as the Proton acceptor in the catalytic mechanism. Substrate is bound by residues 92–96 (DSGGF), Asp146, Gln189, and Gly216. The RNA binding stretch occupies residues 247–253 (GVGKPAD). The active-site Nucleophile is the Asp266. Positions 271 to 275 (TRSGR) are RNA binding; important for wobble base 34 recognition. Residues Cys304, Cys306, Cys309, and His335 each contribute to the Zn(2+) site.

Belongs to the queuine tRNA-ribosyltransferase family. In terms of assembly, homodimer. Within each dimer, one monomer is responsible for RNA recognition and catalysis, while the other monomer binds to the replacement base PreQ1. Requires Zn(2+) as cofactor.

It carries out the reaction 7-aminomethyl-7-carbaguanine + guanosine(34) in tRNA = 7-aminomethyl-7-carbaguanosine(34) in tRNA + guanine. It participates in tRNA modification; tRNA-queuosine biosynthesis. Catalyzes the base-exchange of a guanine (G) residue with the queuine precursor 7-aminomethyl-7-deazaguanine (PreQ1) at position 34 (anticodon wobble position) in tRNAs with GU(N) anticodons (tRNA-Asp, -Asn, -His and -Tyr). Catalysis occurs through a double-displacement mechanism. The nucleophile active site attacks the C1' of nucleotide 34 to detach the guanine base from the RNA, forming a covalent enzyme-RNA intermediate. The proton acceptor active site deprotonates the incoming PreQ1, allowing a nucleophilic attack on the C1' of the ribose to form the product. After dissociation, two additional enzymatic reactions on the tRNA convert PreQ1 to queuine (Q), resulting in the hypermodified nucleoside queuosine (7-(((4,5-cis-dihydroxy-2-cyclopenten-1-yl)amino)methyl)-7-deazaguanosine). The protein is Queuine tRNA-ribosyltransferase of Rickettsia akari (strain Hartford).